Consider the following 230-residue polypeptide: Ion-translocating oxidoreductase complex subunit E (230 aa).

Transmembrane regions (helical) follow at residues 18–38 (ALVQLLGMCPLLAVTSTATNA), 39–59 (LGLGLATTLVLTLTNLTISAL), 63–83 (TPAEIRIPIYVMIIASVVSAV), 86–106 (LINAYAFGLYQSLGIFIPLIV), 125–145 (ALSALDGFSIGMGATGAMFVL), and 182–202 (PFLLAMLPPGAFIGLGLMLAV).

It belongs to the NqrDE/RnfAE family. In terms of assembly, the complex is composed of six subunits: RnfA, RnfB, RnfC, RnfD, RnfE and RnfG.

The protein resides in the cell inner membrane. Functionally, part of a membrane-bound complex that couples electron transfer with translocation of ions across the membrane. This is Ion-translocating oxidoreductase complex subunit E from Citrobacter koseri (strain ATCC BAA-895 / CDC 4225-83 / SGSC4696).